Consider the following 277-residue polypeptide: Large ribosomal subunit protein uL2 (277 aa).

The segment at 219–277 (TVRGSVMNPNDHPHGGGEGKAPVGRKAPSTPWGKPALGLKTRNKKAKSNKLIVRRRNEK) is disordered. The span at 259–277 (TRNKKAKSNKLIVRRRNEK) shows a compositional bias: basic residues.

Belongs to the universal ribosomal protein uL2 family. In terms of assembly, part of the 50S ribosomal subunit. Forms a bridge to the 30S subunit in the 70S ribosome.

One of the primary rRNA binding proteins. Required for association of the 30S and 50S subunits to form the 70S ribosome, for tRNA binding and peptide bond formation. It has been suggested to have peptidyltransferase activity; this is somewhat controversial. Makes several contacts with the 16S rRNA in the 70S ribosome. The chain is Large ribosomal subunit protein uL2 from Streptococcus equi subsp. zooepidemicus (strain MGCS10565).